The primary structure comprises 165 residues: Transcriptional regulator MraZ (165 aa).

2 SpoVT-AbrB domains span residues 5 to 51 and 80 to 123; these read TYEG…GEEL and SAEL…NPER.

This sequence belongs to the MraZ family. In terms of assembly, forms oligomers.

Its subcellular location is the cytoplasm. The protein localises to the nucleoid. In Hyphomonas neptunium (strain ATCC 15444), this protein is Transcriptional regulator MraZ.